We begin with the raw amino-acid sequence, 65 residues long: Small ribosomal subunit protein bS21 (65 aa).

Residues 44–65 form a disordered region; the sequence is DDRLKRSRGKRRAQRANEERNS. Residues 48–57 are compositionally biased toward basic residues; the sequence is KRSRGKRRAQ.

It belongs to the bacterial ribosomal protein bS21 family.

This is Small ribosomal subunit protein bS21 from Prosthecochloris aestuarii (strain DSM 271 / SK 413).